The sequence spans 111 residues: uncharacterized protein (111 aa).

This sequence to A.fulgidus AF1864.

This is an uncharacterized protein from Aquifex aeolicus (strain VF5).